Consider the following 387-residue polypeptide: Prostatic acid phosphatase (387 aa).

A signal peptide spans 1-34; sequence MRNAALLMTRATSLRLSLLLLLSFLPDLDGGVRA. R45 contacts substrate. H46 serves as the catalytic Nucleophile. R49 contributes to the substrate binding site. N96 is a glycosylation site (N-linked (GlcNAc...) asparagine). Substrate is bound at residue R113. 3 disulfide bridges follow: C163–C374, C217–C315, and C349–C353. N222 carries an N-linked (GlcNAc...) asparagine glycan. H291 is a binding site for substrate. The active-site Proton donor is D292. N335 carries an N-linked (GlcNAc...) asparagine glycan.

This sequence belongs to the histidine acid phosphatase family. Homodimer; dimer formation is required for phosphatase activity.

It is found in the secreted. The catalysed reaction is a phosphate monoester + H2O = an alcohol + phosphate. The enzyme catalyses 1-(9Z-octadecenoyl)-sn-glycero-3-phosphate + H2O = 1-(9Z-octadecenoyl)-sn-glycerol + phosphate. It carries out the reaction O-phospho-L-tyrosyl-[protein] + H2O = L-tyrosyl-[protein] + phosphate. A non-specific tyrosine phosphatase that dephosphorylates a diverse number of substrates under acidic conditions (pH 4-6) including alkyl, aryl, and acyl orthophosphate monoesters and phosphorylated proteins. Has lipid phosphatase activity and inactivates lysophosphatidic acid in seminal plasma. The protein is Prostatic acid phosphatase (ACP3) of Bos taurus (Bovine).